The primary structure comprises 137 residues: Large-conductance mechanosensitive channel (137 aa).

2 consecutive transmembrane segments (helical) span residues 10–30 (FAMR…AAFG) and 76–96 (GVFI…FVAI).

Belongs to the MscL family. As to quaternary structure, homopentamer.

It is found in the cell inner membrane. Functionally, channel that opens in response to stretch forces in the membrane lipid bilayer. May participate in the regulation of osmotic pressure changes within the cell. This chain is Large-conductance mechanosensitive channel, found in Salmonella choleraesuis (strain SC-B67).